The following is a 152-amino-acid chain: Glutamyl-tRNA(Gln) amidotransferase subunit F, mitochondrial (152 aa).

It belongs to the GatF family. As to quaternary structure, subunit of the heterotrimeric GatFAB amidotransferase (AdT) complex, composed of A, B and F subunits.

The protein resides in the mitochondrion inner membrane. It carries out the reaction L-glutamyl-tRNA(Gln) + L-glutamine + ATP + H2O = L-glutaminyl-tRNA(Gln) + L-glutamate + ADP + phosphate + H(+). Its function is as follows. Allows the formation of correctly charged Gln-tRNA(Gln) through the transamidation of misacylated Glu-tRNA(Gln) in the mitochondria. The reaction takes place in the presence of glutamine and ATP through an activated gamma-phospho-Glu-tRNA(Gln). Required for proper protein synthesis within the mitochondrion. The polypeptide is Glutamyl-tRNA(Gln) amidotransferase subunit F, mitochondrial (Komagataella phaffii (strain GS115 / ATCC 20864) (Yeast)).